The following is a 203-amino-acid chain: UDP-N-acetylglucosamine transferase subunit ALG13 (203 aa).

This sequence belongs to the glycosyltransferase 28 family. As to quaternary structure, heterodimer with ALG14 to form a functional enzyme.

It is found in the endoplasmic reticulum. The catalysed reaction is an N-acetyl-alpha-D-glucosaminyl-diphospho-di-trans,poly-cis-dolichol + UDP-N-acetyl-alpha-D-glucosamine = an N,N'-diacetylchitobiosyl-diphospho-di-trans,poly-cis-dolichol + UDP + H(+). In terms of biological role, involved in protein N-glycosylation. Essential for the second step of the dolichol-linked oligosaccharide pathway. This is UDP-N-acetylglucosamine transferase subunit ALG13 (ALG13) from Eremothecium gossypii (strain ATCC 10895 / CBS 109.51 / FGSC 9923 / NRRL Y-1056) (Yeast).